A 402-amino-acid chain; its full sequence is Propionate kinase (402 aa).

Residues N11 and K18 each coordinate ATP. Residue N11 participates in Mg(2+) binding. R86 is a substrate binding site. The Proton donor/acceptor role is filled by D143. ATP-binding positions include H175, 203–207, 278–280, and 326–330; these read HLGNG, DLR, and GIGEN.

The protein belongs to the acetokinase family. TdcD subfamily. Homodimer. It depends on Mg(2+) as a cofactor.

It carries out the reaction propanoate + ATP = propanoyl phosphate + ADP. It participates in amino-acid degradation; L-threonine degradation via propanoate pathway; propanoate from L-threonine: step 4/4. Catalyzes the conversion of propionyl phosphate and ADP to propionate and ATP. This is Propionate kinase from Citrobacter koseri (strain ATCC BAA-895 / CDC 4225-83 / SGSC4696).